Reading from the N-terminus, the 129-residue chain is Large ribosomal subunit protein bL17 (129 aa).

This sequence belongs to the bacterial ribosomal protein bL17 family. As to quaternary structure, part of the 50S ribosomal subunit. Contacts protein L32.

This Actinobacillus succinogenes (strain ATCC 55618 / DSM 22257 / CCUG 43843 / 130Z) protein is Large ribosomal subunit protein bL17.